The chain runs to 1366 residues: DNA-directed RNA polymerase subunit beta (1366 aa).

This sequence belongs to the RNA polymerase beta chain family. The RNAP catalytic core consists of 2 alpha, 1 beta, 1 beta' and 1 omega subunit. When a sigma factor is associated with the core the holoenzyme is formed, which can initiate transcription.

It catalyses the reaction RNA(n) + a ribonucleoside 5'-triphosphate = RNA(n+1) + diphosphate. Its function is as follows. DNA-dependent RNA polymerase catalyzes the transcription of DNA into RNA using the four ribonucleoside triphosphates as substrates. The chain is DNA-directed RNA polymerase subunit beta from Marinomonas sp. (strain MWYL1).